Here is a 248-residue protein sequence, read N- to C-terminus: Probable phosphatase VF_A0065 (248 aa).

The Zn(2+) site is built by H8, H10, H16, H41, E74, H102, H132, D194, and H196.

The protein belongs to the PHP family. The cofactor is Zn(2+).

In Aliivibrio fischeri (strain ATCC 700601 / ES114) (Vibrio fischeri), this protein is Probable phosphatase VF_A0065.